We begin with the raw amino-acid sequence, 406 residues long: Bifunctional enzyme IspD/IspF (406 aa).

Residues 1–247 (MSLIRVNGEA…ALFFNPAKDT (247 aa)) are 2-C-methyl-D-erythritol 4-phosphate cytidylyltransferase. The segment at 248-406 (FIGMGFDTHA…HVSMRYKQKL (159 aa)) is 2-C-methyl-D-erythritol 2,4-cyclodiphosphate synthase. Residues D254 and H256 each contribute to the a divalent metal cation site. 4-CDP-2-C-methyl-D-erythritol 2-phosphate-binding positions include 254-256 (DTH) and 280-281 (HS). Residue H288 participates in a divalent metal cation binding. Residues 302 to 304 (DIG), 307 to 311 (FPDND), 378 to 381 (TTME), F385, and K388 each bind 4-CDP-2-C-methyl-D-erythritol 2-phosphate.

This sequence in the N-terminal section; belongs to the IspD/TarI cytidylyltransferase family. IspD subfamily. The protein in the C-terminal section; belongs to the IspF family. Requires a divalent metal cation as cofactor.

It carries out the reaction 2-C-methyl-D-erythritol 4-phosphate + CTP + H(+) = 4-CDP-2-C-methyl-D-erythritol + diphosphate. The enzyme catalyses 4-CDP-2-C-methyl-D-erythritol 2-phosphate = 2-C-methyl-D-erythritol 2,4-cyclic diphosphate + CMP. It participates in isoprenoid biosynthesis; isopentenyl diphosphate biosynthesis via DXP pathway; isopentenyl diphosphate from 1-deoxy-D-xylulose 5-phosphate: step 2/6. It functions in the pathway isoprenoid biosynthesis; isopentenyl diphosphate biosynthesis via DXP pathway; isopentenyl diphosphate from 1-deoxy-D-xylulose 5-phosphate: step 4/6. In terms of biological role, bifunctional enzyme that catalyzes the formation of 4-diphosphocytidyl-2-C-methyl-D-erythritol from CTP and 2-C-methyl-D-erythritol 4-phosphate (MEP) (IspD), and catalyzes the conversion of 4-diphosphocytidyl-2-C-methyl-D-erythritol 2-phosphate (CDP-ME2P) to 2-C-methyl-D-erythritol 2,4-cyclodiphosphate (ME-CPP) with a corresponding release of cytidine 5-monophosphate (CMP) (IspF). The sequence is that of Bifunctional enzyme IspD/IspF from Helicobacter pylori (strain P12).